The primary structure comprises 188 residues: Peptide methionine sulfoxide reductase MsrA (188 aa).

Residues 1–25 (MEGNEKAEQKNATSEESTDIFENPG) form a disordered region. The active site involves Cys37.

The protein belongs to the MsrA Met sulfoxide reductase family.

The catalysed reaction is L-methionyl-[protein] + [thioredoxin]-disulfide + H2O = L-methionyl-(S)-S-oxide-[protein] + [thioredoxin]-dithiol. It catalyses the reaction [thioredoxin]-disulfide + L-methionine + H2O = L-methionine (S)-S-oxide + [thioredoxin]-dithiol. In terms of biological role, has an important function as a repair enzyme for proteins that have been inactivated by oxidation. Catalyzes the reversible oxidation-reduction of methionine sulfoxide in proteins to methionine. In Methanosarcina acetivorans (strain ATCC 35395 / DSM 2834 / JCM 12185 / C2A), this protein is Peptide methionine sulfoxide reductase MsrA.